A 770-amino-acid chain; its full sequence is Formate acetyltransferase (770 aa).

Residues 5–635 form the PFL domain; sequence NEMQKLAWAG…KTGNTPDGRR (631 aa). Residue cysteine 419 is the S-acetylcysteine intermediate of the active site. Catalysis depends on cysteine 420, which acts as the Cysteine radical intermediate. A Glycine radical domain is found at 642 to 770; that stretch reads PGANPMHGRD…VITRTFTESM (129 aa). A Glycine radical modification is found at glycine 745.

Belongs to the glycyl radical enzyme (GRE) family. PFL subfamily. Homodimer.

It is found in the cytoplasm. It carries out the reaction formate + acetyl-CoA = pyruvate + CoA. Its pathway is fermentation; pyruvate fermentation; formate from pyruvate: step 1/1. In terms of biological role, catalyzes the conversion of pyruvate to formate and acetyl-CoA. The sequence is that of Formate acetyltransferase (pflB) from Haemophilus influenzae (strain ATCC 51907 / DSM 11121 / KW20 / Rd).